The primary structure comprises 1183 residues: Chromosome partition protein Smc (1183 aa).

32–39 (PNGSGKSN) provides a ligand contact to ATP. The stretch at 162–483 (EEAAGIKKLQ…KLSQDIREFE (322 aa)) forms a coiled coil. The 114-residue stretch at 519–632 (SGIDGVLISL…VENIDIATDI (114 aa)) folds into the SMC hinge domain. Residues 666-1019 (INQIFERKKE…VMDLIQEIDE (354 aa)) are a coiled coil.

It belongs to the SMC family. Homodimer.

The protein resides in the cytoplasm. In terms of biological role, required for chromosome condensation and partitioning. The polypeptide is Chromosome partition protein Smc (Fusobacterium nucleatum subsp. nucleatum (strain ATCC 25586 / DSM 15643 / BCRC 10681 / CIP 101130 / JCM 8532 / KCTC 2640 / LMG 13131 / VPI 4355)).